Consider the following 113-residue polypeptide: Large ribosomal subunit protein bL19 (113 aa).

This sequence belongs to the bacterial ribosomal protein bL19 family.

In terms of biological role, this protein is located at the 30S-50S ribosomal subunit interface and may play a role in the structure and function of the aminoacyl-tRNA binding site. The polypeptide is Large ribosomal subunit protein bL19 (Mycolicibacterium vanbaalenii (strain DSM 7251 / JCM 13017 / BCRC 16820 / KCTC 9966 / NRRL B-24157 / PYR-1) (Mycobacterium vanbaalenii)).